We begin with the raw amino-acid sequence, 190 residues long: Ribosome-recycling factor (190 aa).

It belongs to the RRF family.

The protein resides in the cytoplasm. Responsible for the release of ribosomes from messenger RNA at the termination of protein biosynthesis. May increase the efficiency of translation by recycling ribosomes from one round of translation to another. In Fusobacterium nucleatum subsp. nucleatum (strain ATCC 25586 / DSM 15643 / BCRC 10681 / CIP 101130 / JCM 8532 / KCTC 2640 / LMG 13131 / VPI 4355), this protein is Ribosome-recycling factor.